We begin with the raw amino-acid sequence, 367 residues long: Ataxin-7-like protein 3 (367 aa).

Residues 84–105 (CVCPNCSRSIAASRFAPHLEKC) form an SGF11-type zinc finger. Residues 116-125 (ANRRIASSNN) show a composition bias toward low complexity. The disordered stretch occupies residues 116 to 184 (ANRRIASSNN…GELSGSVNPD (69 aa)). Acidic residues predominate over residues 132–141 (DQEDNDDIND). The 68-residue stretch at 199-266 (LGPEELRSIL…TMLENEAYEP (68 aa)) folds into the SCA7 domain. Residues 280-299 (ASSDISPSDSASSKASTNNS) are compositionally biased toward low complexity. Residues 280–367 (ASSDISPSDS…PAPSIYDDLN (88 aa)) form a disordered region. Residues 318-329 (GERDKAQERDRI) are compositionally biased toward basic and acidic residues. Residues 330-346 (AGSGSSGSSSQNALGLS) show a composition bias toward low complexity.

This sequence belongs to the SGF11 family. As to quaternary structure, component of some SAGA transcription coactivator-HAT complexes. Within the SAGA complex, participates in a subcomplex of SAGA called the DUB module (deubiquitination module).

The protein resides in the nucleus. Component of the transcription regulatory histone acetylation (HAT) complex SAGA, a multiprotein complex that activates transcription by remodeling chromatin and mediating histone acetylation and deubiquitination. Within the SAGA complex, participates in a subcomplex that specifically deubiquitinates histone H2B. The SAGA complex is recruited to specific gene promoters by activators, where it is required for transcription. In Danio rerio (Zebrafish), this protein is Ataxin-7-like protein 3 (atxn7l3).